A 142-amino-acid chain; its full sequence is Large ribosomal subunit protein uL11 (142 aa).

This sequence belongs to the universal ribosomal protein uL11 family. In terms of assembly, part of the ribosomal stalk of the 50S ribosomal subunit. Interacts with L10 and the large rRNA to form the base of the stalk. L10 forms an elongated spine to which L12 dimers bind in a sequential fashion forming a multimeric L10(L12)X complex. In terms of processing, one or more lysine residues are methylated.

In terms of biological role, forms part of the ribosomal stalk which helps the ribosome interact with GTP-bound translation factors. The polypeptide is Large ribosomal subunit protein uL11 (Yersinia pestis bv. Antiqua (strain Angola)).